Consider the following 277-residue polypeptide: Myelin proteolipid protein (277 aa).

Residues 1 to 10 (MGLLECCARC) lie on the Cytoplasmic side of the membrane. 3 S-palmitoyl cysteine lipidation sites follow: C6, C7, and C10. The chain crosses the membrane as a helical span at residues 11–36 (LVGAPFASLVATGLCFFGVALFCGCG). Over 37-59 (HEALTGTEKLIETYFSKNYQDYE) the chain is Extracellular. Residues 60–88 (YLINVIHAFQYVIYGTASFFFLYGALLLA) traverse the membrane as a helical segment. The Cytoplasmic portion of the chain corresponds to 89–151 (EGFYTTGAVR…LGKWLGHPDK (63 aa)). C109 carries S-palmitoyl cysteine lipidation. S114 is modified (phosphoserine). Phosphothreonine is present on residues T116 and T118. S-palmitoyl cysteine attachment occurs at residues C139 and C141. The chain crosses the membrane as a helical span at residues 152-178 (FVGITYALTVVWLLVFACSAVPVYIYF). Topologically, residues 179–238 (NTWTTCQSIAFPSKTSASIGTLCADARMYGVLPWNAFPGKVCGSNLLSICKTAEFQMTFH) are extracellular. Disulfide bonds link C184-C228 and C201-C220. T199 is lipidated: O-palmitoyl threonine. The helical transmembrane segment at 239–268 (LFIAAFVGAAATLVSLLTFMIAATYNFAVL) threads the bilayer. Residues 269–277 (KLMGRGTKF) are Cytoplasmic-facing.

It belongs to the myelin proteolipid protein family. In terms of assembly, interacts with MAL.

It localises to the cell membrane. It is found in the myelin membrane. In terms of biological role, this is the major myelin protein from the central nervous system. It plays an important role in the formation or maintenance of the multilamellar structure of myelin. This chain is Myelin proteolipid protein (PLP1), found in Oryctolagus cuniculus (Rabbit).